We begin with the raw amino-acid sequence, 441 residues long: Na(+)/H(+) antiporter NhaA 2 (441 aa).

12 helical membrane-spanning segments follow: residues Val-34–Trp-54, Leu-77–Leu-97, Ala-115–Val-135, Gly-146–Ser-166, Phe-176–Tyr-196, Glu-199–Val-219, Ser-225–Val-245, Val-249–Pro-269, Val-290–Leu-310, Pro-317–Thr-337, Trp-355–Ile-375, and Phe-389–Leu-409.

This sequence belongs to the NhaA Na(+)/H(+) (TC 2.A.33) antiporter family.

The protein resides in the cell membrane. It carries out the reaction Na(+)(in) + 2 H(+)(out) = Na(+)(out) + 2 H(+)(in). In terms of biological role, na(+)/H(+) antiporter that extrudes sodium in exchange for external protons. In Mycobacterium sp. (strain MCS), this protein is Na(+)/H(+) antiporter NhaA 2.